Here is a 297-residue protein sequence, read N- to C-terminus: 4-hydroxy-tetrahydrodipicolinate synthase (297 aa).

Pyruvate is bound at residue T46. Catalysis depends on Y134, which acts as the Proton donor/acceptor. K163 functions as the Schiff-base intermediate with substrate in the catalytic mechanism. I205 serves as a coordination point for pyruvate.

The protein belongs to the DapA family. As to quaternary structure, homotetramer; dimer of dimers.

The protein localises to the cytoplasm. The enzyme catalyses L-aspartate 4-semialdehyde + pyruvate = (2S,4S)-4-hydroxy-2,3,4,5-tetrahydrodipicolinate + H2O + H(+). It functions in the pathway amino-acid biosynthesis; L-lysine biosynthesis via DAP pathway; (S)-tetrahydrodipicolinate from L-aspartate: step 3/4. Its function is as follows. Catalyzes the condensation of (S)-aspartate-beta-semialdehyde [(S)-ASA] and pyruvate to 4-hydroxy-tetrahydrodipicolinate (HTPA). The chain is 4-hydroxy-tetrahydrodipicolinate synthase from Thermoanaerobacter pseudethanolicus (strain ATCC 33223 / 39E) (Clostridium thermohydrosulfuricum).